A 192-amino-acid polypeptide reads, in one-letter code: Ribosome maturation factor RimM (192 aa).

The PRC barrel domain occupies 99 to 186; that stretch reads ADEYHVSELV…RIEIAPPPGL (88 aa).

The protein belongs to the RimM family. As to quaternary structure, binds ribosomal protein uS19.

The protein localises to the cytoplasm. In terms of biological role, an accessory protein needed during the final step in the assembly of 30S ribosomal subunit, possibly for assembly of the head region. Essential for efficient processing of 16S rRNA. May be needed both before and after RbfA during the maturation of 16S rRNA. It has affinity for free ribosomal 30S subunits but not for 70S ribosomes. The chain is Ribosome maturation factor RimM from Microcystis aeruginosa (strain NIES-843 / IAM M-2473).